We begin with the raw amino-acid sequence, 243 residues long: MGQTAGDLGWRLSLLLLPLLLVQAGVWGFPRPPGRPQLSLQELRREFTVSLHLARKLLSEVRGQAHRFAESHLPGVNLYLLPLGEQLPDVSLTFQAWRRLSDPERLCFISTTLQPFHALLGGLGTQGRWTNMERMQLWAMRLDLRDLQRHLRFQVLAAGFNLPEEEEEEEEEEEEERKGLLPGALGSALQGPAQVSWPQLLSTYRLLHSLELVLSRAVRELLLLSKAGHSVWPLGFPTLSPQP.

The N-terminal stretch at 1 to 28 (MGQTAGDLGWRLSLLLLPLLLVQAGVWG) is a signal peptide.

It belongs to the IL-6 superfamily. Heterodimer with EBI3; not disulfide-linked. This heterodimer is known as interleukin IL-27. Post-translationally, O-glycosylated. In terms of tissue distribution, expressed in monocytes and in placenta.

It is found in the secreted. Its function is as follows. Associates with EBI3 to form the IL-27 interleukin, a heterodimeric cytokine which functions in innate immunity. IL-27 has pro- and anti-inflammatory properties, that can regulate T-helper cell development, suppress T-cell proliferation, stimulate cytotoxic T-cell activity, induce isotype switching in B-cells, and that has diverse effects on innate immune cells. Among its target cells are CD4 T-helper cells which can differentiate in type 1 effector cells (TH1), type 2 effector cells (TH2) and IL17 producing helper T-cells (TH17). It drives rapid clonal expansion of naive but not memory CD4 T-cells. It also strongly synergizes with IL-12 to trigger interferon-gamma/IFN-gamma production of naive CD4 T-cells, binds to the cytokine receptor WSX-1/TCCR which appears to be required but not sufficient for IL-27-mediated signal transduction. IL-27 potentiate the early phase of TH1 response and suppress TH2 and TH17 differentiation. It induces the differentiation of TH1 cells via two distinct pathways, p38 MAPK/TBX21- and ICAM1/ITGAL/ERK-dependent pathways. It also induces STAT1, STAT3, STAT4 and STAT5 phosphorylation and activates TBX21/T-Bet via STAT1 with resulting IL12RB2 up-regulation, an event crucial to TH1 cell commitment. It suppresses the expression of GATA3, the inhibitor TH1 cells development. In CD8 T-cells, it activates STATs as well as GZMB. IL-27 reveals to be a potent inhibitor of TH17 cell development and of IL-17 production. Indeed IL27 alone is also able to inhibit the production of IL17 by CD4 and CD8 T-cells. While IL-27 suppressed the development of pro-inflammatory Th17 cells via STAT1, it inhibits the development of anti-inflammatory inducible regulatory T-cells, iTreg, independently of STAT1. IL-27 also has an effect on cytokine production, it suppresses pro-inflammatory cytokine production such as IL2, IL4, IL5 and IL6 and activates suppressors of cytokine signaling such as SOCS1 and SOCS3. Apart from suppression of cytokine production, IL-27 also antagonizes the effects of some cytokines such as IL6 through direct effects on T-cells. Another important role of IL-27 is its antitumor activity as well as its antiangiogenic activity with activation of production of antiangiogenic chemokines such as IP-10/CXCL10 and MIG/CXCL9. In vein endothelial cells, it induces IRF1/interferon regulatory factor 1 and increase the expression of MHC class II transactivator/CIITA with resulting up-regulation of major histocompatibility complex class II. IL-27 also demonstrates antiviral activity with inhibitory properties on HIV-1 replication. The chain is Interleukin-27 subunit alpha (IL27) from Homo sapiens (Human).